The primary structure comprises 90 residues: Cell division protein CrgA (90 aa).

The tract at residues 1–25 (MPKARVTKNETAPVSSNPSANRTPV) is disordered. The span at 9 to 22 (NETAPVSSNPSANR) shows a compositional bias: polar residues. 2 helical membrane-spanning segments follow: residues 38 to 58 (VIMF…YLVG) and 67 to 87 (LGAW…LMTM).

The protein belongs to the CrgA family.

It localises to the cell membrane. Its function is as follows. Involved in cell division. This chain is Cell division protein CrgA, found in Corynebacterium glutamicum (strain ATCC 13032 / DSM 20300 / JCM 1318 / BCRC 11384 / CCUG 27702 / LMG 3730 / NBRC 12168 / NCIMB 10025 / NRRL B-2784 / 534).